Here is a 477-residue protein sequence, read N- to C-terminus: MLDFINLINNINNPTSPTKITPKVIPIKYEIKDILVDSDEEKYECDICTLELFIESEPKALQCKEGHLACRRCWERYLSTNKQCMTCKTPISSISELSRNRYLEKEYSNWLNDRLVFCPNSNENVFRLNMSGLPAINNSNQTLHQDLCNHGAMKFSELQNHYKACESRILQCNLCLIKFCSKDSDKHQNECSKVYSKCEFCNSNILRSSLSDHHKTHCTKYLIECPHCKIMIKRDTITKHINDDCEEIMITCSEYLCGKRFTRSKMQIHSLEHSVTKLMNQNEIIKKDNQNLDQEKKIEEIKLKLNNLLNNYIQLKNEIAVLKQNSFKEMVYSNKWIIPEYRSFNALYTHKKSKNSNDFQVGSHTFYIKIYPNGQAGKQGKFGVFLERKPRYGILLKYMFSFSLLPPEDSTATKVSLGPIHRVLILLLIDFEESRSLSCGTNVFTDSRKVLKDFLNEKGELEISFSITIQDEKIIPL.

An RING-type; degenerate zinc finger spans residues 45–88 (CDICTLELFIESEPKALQCKEGHLACRRCWERYLSTNKQCMTCK). 2 consecutive TRAF-type zinc fingers follow at residues 160-211 (NHYK…SSLS) and 212-267 (DHHK…SKMQ). Residues 271-326 (LEHSVTKLMNQNEIIKKDNQNLDQEKKIEEIKLKLNNLLNNYIQLKNEIAVLKQNS) adopt a coiled-coil conformation. The MATH domain occupies 331 to 463 (VYSNKWIIPE…FLNEKGELEI (133 aa)).

Belongs to the TNF receptor-associated factor family. A subfamily.

The protein localises to the cytoplasm. Functionally, probable adapter protein and signal transducer that links members of the tumor necrosis factor receptor family to different signaling pathways by association with the receptor cytoplasmic domain and kinases. The protein is TNF receptor-associated factor family protein DDB_G0278133 of Dictyostelium discoideum (Social amoeba).